The primary structure comprises 615 residues: Nuclear receptor subfamily 1 group D member 1 (615 aa).

Residues 1–12 (MTTLDSNNNTGG) show a composition bias toward polar residues. The tract at residues 1-70 (MTTLDSNNNT…TQDPARSFGT (70 aa)) is required for phosphorylation by CSNK1E and cytoplasmic localization. The tract at residues 1 to 120 (MTTLDSNNNT…SSRVSPSKGT (120 aa)) is disordered. The tract at residues 1-129 (MTTLDSNNNT…TSNITKLNGM (129 aa)) is modulating. A compositionally biased stretch (low complexity) spans 14–34 (ITYIGSSGSSPSRTSPESLYS). The span at 35–48 (DSSNGSFQSLTQGC) shows a compositional bias: polar residues. The crucial for activation of GJA1 stretch occupies residues 49–285 (PTYFPPSPTG…PPRSPSPEPT (237 aa)). Phosphoserine; by GSK3-beta is present on residues S55 and S59. A compositionally biased stretch (low complexity) spans 72–103 (PPSLSDDSSPSSASSSSSSSSSSFYNGSPPGS). A DNA-binding region (nuclear receptor) is located at residues 130–206 (VLLCKVCGDV…VGMSRDAVRF (77 aa)). 2 NR C4-type zinc fingers span residues 133 to 153 (CKVCGDVASGFHYGVHACEGC) and 170 to 194 (CLKNENCSIVRINRNRCQQCRFKKC). An N6-acetyllysine; by KAT5 mark is found at K192 and K193. Disordered stretches follow at residues 235–287 (LCPL…PTVE), 312–337 (PGNFNANHASGSPPATTPQCWESQGC), and 357–385 (NGLRQGPSSYPPTWPSGPAHHSCHQPNSN). Positions 253–262 (PSPPPAPAPT) are enriched in pro residues. Position 275 is a phosphothreonine; by CDK1 (T275). Residues 285–615 (TVEDVISQVA…KLLSFRVDAQ (331 aa)) form the NR LBD domain. N6-acetyllysine is present on K401. Residue C419 participates in heme binding. K592 is subject to N6-acetyllysine. H603 is a heme binding site.

It belongs to the nuclear hormone receptor family. NR1 subfamily. Binds DNA as a monomer or a homodimer. Interacts with C1D, NR2E3, SP1 and ZNHIT1. Interacts with OPHN1 (via C-terminus). Interacts with PER2; the interaction associates PER2 to BMAL1 promoter region. Interacts with CRY1. Interacts with CCAR2. Interacts with SIAH2. Interacts with FBXW7 and CDK1. Interacts with HUWE1. Interacts with NR0B2. Interacts with NFIL3. Interacts (via domain NR LBD) with HSP90AA1 and HSP90AB1. In terms of processing, ubiquitinated, leading to its proteasomal degradation. Ubiquitinated by the SCF(FBXW7) complex when phosphorylated by CDK1 leading to its proteasomal degradation. Ubiquitinated by SIAH2; leading to its proteasomal degradation. Rapidly ubiquitinated in response to inflammatory triggers and sumoylation is a prerequisite to its ubiquitination. Sumoylated by UBE2I, desumoylated by SENP1, and sumoylation is a prerequisite to its ubiquitination. Post-translationally, phosphorylated by CSNK1E; phosphorylation enhances its cytoplasmic localization. In terms of processing, undergoes lysosome-mediated degradation in a time-dependent manner in the liver.

It localises to the nucleus. The protein localises to the cytoplasm. It is found in the cell projection. The protein resides in the dendrite. Its subcellular location is the dendritic spine. Transcriptional repressor which coordinates circadian rhythm and metabolic pathways in a heme-dependent manner. Integral component of the complex transcription machinery that governs circadian rhythmicity and forms a critical negative limb of the circadian clock by directly repressing the expression of core clock components BMAL1, CLOCK and CRY1. Also regulates genes involved in metabolic functions, including lipid and bile acid metabolism, adipogenesis, gluconeogenesis and the macrophage inflammatory response. Acts as a receptor for heme which stimulates its interaction with the NCOR1/HDAC3 corepressor complex, enhancing transcriptional repression. Recognizes two classes of DNA response elements within the promoter of its target genes and can bind to DNA as either monomers or homodimers, depending on the nature of the response element. Binds as a monomer to a response element composed of the consensus half-site motif 5'-[A/G]GGTCA-3' preceded by an A/T-rich 5' sequence (RevRE), or as a homodimer to a direct repeat of the core motif spaced by two nucleotides (RevDR-2). Acts as a potent competitive repressor of ROR alpha (RORA) function and regulates the levels of its ligand heme by repressing the expression of PPARGC1A, a potent inducer of heme synthesis. Regulates lipid metabolism by repressing the expression of APOC3 and by influencing the activity of sterol response element binding proteins (SREBPs); represses INSIG2 which interferes with the proteolytic activation of SREBPs which in turn govern the rhythmic expression of enzymes with key functions in sterol and fatty acid synthesis. Regulates gluconeogenesis via repression of G6PC1 and PEPCK and adipocyte differentiation via repression of PPARG. Regulates glucagon release in pancreatic alpha-cells via the AMPK-NAMPT-SIRT1 pathway and the proliferation, glucose-induced insulin secretion and expression of key lipogenic genes in pancreatic-beta cells. Positively regulates bile acid synthesis by increasing hepatic expression of CYP7A1 via repression of NR0B2 and NFIL3 which are negative regulators of CYP7A1. Modulates skeletal muscle oxidative capacity by regulating mitochondrial biogenesis and autophagy; controls mitochondrial biogenesis and respiration by interfering with the STK11-PRKAA1/2-SIRT1-PPARGC1A signaling pathway. Represses the expression of SERPINE1/PAI1, an important modulator of cardiovascular disease and the expression of inflammatory cytokines and chemokines in macrophages. Represses gene expression at a distance in macrophages by inhibiting the transcription of enhancer-derived RNAs (eRNAs). Plays a role in the circadian regulation of body temperature and negatively regulates thermogenic transcriptional programs in brown adipose tissue (BAT); imposes a circadian oscillation in BAT activity, increasing body temperature when awake and depressing thermogenesis during sleep. In concert with NR2E3, regulates transcriptional networks critical for photoreceptor development and function. In addition to its activity as a repressor, can also act as a transcriptional activator. In the ovarian granulosa cells acts as a transcriptional activator of STAR which plays a role in steroid biosynthesis. In collaboration with SP1, activates GJA1 transcription in a heme-independent manner. Represses the transcription of CYP2B10, CYP4A10 and CYP4A14. Represses the transcription of CES2. Represses and regulates the circadian expression of TSHB in a NCOR1-dependent manner. Negatively regulates the protein stability of NR3C1 and influences the time-dependent subcellular distribution of NR3C1, thereby affecting its transcriptional regulatory activity. Plays a critical role in the circadian control of neutrophilic inflammation in the lung; under resting, non-stress conditions, acts as a rhythmic repressor to limit inflammatory activity whereas in the presence of inflammatory triggers undergoes ubiquitin-mediated degradation thereby relieving inhibition of the inflammatory response. Plays a key role in the circadian regulation of microglial activation and neuroinflammation; suppresses microglial activation through the NF-kappaB pathway in the central nervous system. Plays a role in the regulation of the diurnal rhythms of lipid and protein metabolism in the skeletal muscle via transcriptional repression of genes controlling lipid and amino acid metabolism in the muscle. This chain is Nuclear receptor subfamily 1 group D member 1 (Nr1d1), found in Rattus norvegicus (Rat).